The chain runs to 271 residues: Aquaporin-11 (271 aa).

Residues 1–14 (MSALLGLPPEVQDT) are Cytoplasmic-facing. A helical membrane pass occupies residues 15 to 35 (CISLGLMLLVVLFMGLARVIA). The Lumenal segment spans residues 36–41 (RQQLHR). Residues 42-62 (PMVHAFVLEFLATFQLCYCTH) traverse the membrane as a helical segment. At 63–76 (ELQLLSEQDSGHPT) the chain is on the cytoplasmic side. A helical membrane pass occupies residues 77–97 (WTLTLIYFFSLVHGLTLVGTA). Residues 98-166 (SNPCGVMMQM…NPINTDISKA (69 aa)) lie on the Lumenal side of the membrane. Positions 99 to 101 (NPC) match the NPC motif. Residues 167–187 (IIIEAICSFIFHSALLHFQEV) form a helical membrane-spanning segment. Over 188-194 (RTKLRIH) the chain is Cytoplasmic. Residues 195–215 (VLAALITFLAYAGGSLTGALF) form a helical membrane-spanning segment. An NPA motif is present at residues 216–218 (NPA). Residues 216-234 (NPALALSLHFPCFDESFYK) lie on the Lumenal side of the membrane. A helical transmembrane segment spans residues 235–255 (FFVVYWVAPSLGVLLMILMFS). Residues 256–271 (FFLPWLHNNQLSNKKE) are Cytoplasmic-facing.

This sequence belongs to the MIP/aquaporin (TC 1.A.8) family. AQP11/AQP12 subfamily. Homodimer; disulfide-linked. Homotetramer. Can also form homomultimer. In terms of processing, not glycosylated. As to expression, expressed in retina specifically at retinal Mueller glial cells. Expressed in adult testis, in the elongated spermatids (ES) and in residual bodies inside Sertoli cells.

It localises to the endoplasmic reticulum membrane. The protein resides in the cytoplasmic vesicle membrane. It is found in the cell membrane. The catalysed reaction is H2O(in) = H2O(out). The enzyme catalyses glycerol(in) = glycerol(out). It carries out the reaction H2O2(out) = H2O2(in). Channel protein that facilitates the transport of water, glycerol and hydrogen peroxide across membrane of cell or organelles guaranteeing intracellular homeostasis in several organes like liver, kidney and brain. In situation of stress, participates in endoplasmic reticulum (ER) homeostasis by regulating redox homeostasis through the transport of hydrogen peroxide across the endoplasmic reticulum membrane thereby regulating the oxidative stress through the NADPH oxidase 2 pathway. Plays a role by maintaining an environment suitable for translation or protein foldings in the ER lumen namely by participating in the PKD1 glycosylation processing resulting in regulation of PKD1 membrane trafficking thereby preventing the accumulation of unfolding protein in ER. Plays a role in the proximal tubule function by regulating its endosomal acidification. May play a role in postnatal kidney development. The chain is Aquaporin-11 from Rattus norvegicus (Rat).